The chain runs to 298 residues: Troponin T, cardiac muscle (298 aa).

The segment covering 1–70 (MSDIEEVVEE…EAKEAEDGPM (70 aa)) has biased composition (acidic residues). Disordered stretches follow at residues 1–95 (MSDI…GERV) and 120–219 (FENR…EKKK). An N-acetylserine modification is found at S2. S2 bears the Phosphoserine; by CK2 mark. Composition is skewed to basic and acidic residues over residues 120 to 183 (FENR…DEAR) and 203 to 219 (QTERKSGKRQTEREKKK). At T204 the chain carries Phosphothreonine; by PKC/PRKCA. S208 carries the phosphoserine; by PKC/PRKCA modification. T213 is subject to Phosphothreonine; by PKC/PRKCA and RAF1. T294 carries the phosphothreonine; by PKC/PRKCA modification.

Belongs to the troponin T family. Phosphorylation at Thr-213 by PRKCA induces significant reduction in myofilament calcium sensitivity and actomyosin ATPase activity. Heart. The fetal heart shows a greater expression in the atrium than in the ventricle, while the adult heart shows a greater expression in the ventricle than in the atrium. Isoform 6 predominates in normal adult heart. Isoforms 1, 7 and 8 are expressed in fetal heart. Isoform 7 is also expressed in failing adult heart.

Troponin T is the tropomyosin-binding subunit of troponin, the thin filament regulatory complex which confers calcium-sensitivity to striated muscle actomyosin ATPase activity. In Homo sapiens (Human), this protein is Troponin T, cardiac muscle (TNNT2).